A 564-amino-acid chain; its full sequence is MPQIDWKPRSRVVTDGIEATTSRGMLRAVGMGDADWEKPQIGIASSWNEITPCNLSLDRLAQGAKEGVHSGGGYPLQFGTVSVSDGISMGHEGMHFSLVSREVIADSVETVMMAERLDGTVLLAGCDKSLPGMLMAAARLDLSAIFLYAGSIAPGWVKLSDGTEKDVTIIDSFEAVGACKAGKMSEEDLKRIECAIAPGEGACGGMYTANTMASVAEALGMSLPGSAAPPSADRRRDSFAHRSGEAVVSLLKQGITARDILTKKAFENAIAVAMAFGGSTNVVLHLLAIAREAEVDLTIDDFNRIGETVPHIGDLKPFGTYVMNDVDRHGGVPVVMKALLDAGLLHGDCLTVTGKTVAENLAEIDPPAPDGTVLRSLDNPIHPTGGLTILKGTLAPEGAVVKTAGFDAEVFEGPARVFERERAAMDALTAGRINAGDVVVICYEGPKGGPGMREMLAITATIKGAGLGKDVLLLTDGRFSGGTTGLCIGHIAPEAVDAGPIAFVRDGDLIRVDIAARSLDLLVDESELTARRDGWAPLPPRYTRGVLAKYSKLVRSAAEGAVTG.

Residue Cys-53 participates in [2Fe-2S] cluster binding. Residue Asp-85 participates in Mg(2+) binding. Cys-126 serves as a coordination point for [2Fe-2S] cluster. Residues Asp-127 and Lys-128 each coordinate Mg(2+). Lys-128 carries the post-translational modification N6-carboxylysine. [2Fe-2S] cluster is bound at residue Cys-203. A Mg(2+)-binding site is contributed by Glu-454. Catalysis depends on Ser-480, which acts as the Proton acceptor.

It belongs to the IlvD/Edd family. Homodimer. Requires [2Fe-2S] cluster as cofactor. It depends on Mg(2+) as a cofactor.

It catalyses the reaction (2R)-2,3-dihydroxy-3-methylbutanoate = 3-methyl-2-oxobutanoate + H2O. It carries out the reaction (2R,3R)-2,3-dihydroxy-3-methylpentanoate = (S)-3-methyl-2-oxopentanoate + H2O. It participates in amino-acid biosynthesis; L-isoleucine biosynthesis; L-isoleucine from 2-oxobutanoate: step 3/4. Its pathway is amino-acid biosynthesis; L-valine biosynthesis; L-valine from pyruvate: step 3/4. Functions in the biosynthesis of branched-chain amino acids. Catalyzes the dehydration of (2R,3R)-2,3-dihydroxy-3-methylpentanoate (2,3-dihydroxy-3-methylvalerate) into 2-oxo-3-methylpentanoate (2-oxo-3-methylvalerate) and of (2R)-2,3-dihydroxy-3-methylbutanoate (2,3-dihydroxyisovalerate) into 2-oxo-3-methylbutanoate (2-oxoisovalerate), the penultimate precursor to L-isoleucine and L-valine, respectively. This is Dihydroxy-acid dehydratase from Leifsonia xyli subsp. xyli (strain CTCB07).